Here is a 518-residue protein sequence, read N- to C-terminus: ATP synthase subunit alpha (518 aa).

Residue 169-176 participates in ATP binding; it reads GDRQTGKT.

The protein belongs to the ATPase alpha/beta chains family. In terms of assembly, F-type ATPases have 2 components, CF(1) - the catalytic core - and CF(0) - the membrane proton channel. CF(1) has five subunits: alpha(3), beta(3), gamma(1), delta(1), epsilon(1). CF(0) has three main subunits: a(1), b(2) and c(9-12). The alpha and beta chains form an alternating ring which encloses part of the gamma chain. CF(1) is attached to CF(0) by a central stalk formed by the gamma and epsilon chains, while a peripheral stalk is formed by the delta and b chains.

It localises to the cell membrane. The enzyme catalyses ATP + H2O + 4 H(+)(in) = ADP + phosphate + 5 H(+)(out). In terms of biological role, produces ATP from ADP in the presence of a proton gradient across the membrane. The alpha chain is a regulatory subunit. The sequence is that of ATP synthase subunit alpha from Mycoplasma genitalium (strain ATCC 33530 / DSM 19775 / NCTC 10195 / G37) (Mycoplasmoides genitalium).